Reading from the N-terminus, the 97-residue chain is ORF9b protein (97 aa).

A 9b domain is found at methionine 8–lysine 97. The Nuclear export signal signature appears at isoleucine 45–serine 53.

Belongs to the coronavirus group 2 protein 9b family. As to quaternary structure, homodimer. Interacts with host TOMM70; the interaction occurs only with monomer.

It is found in the host cytoplasm. The protein resides in the host mitochondrion. In terms of biological role, plays a role in inhibiting the host innate immune response by targeting the mitochondrial-associated innate immune response. Acts by binding to host TOMM70, inhibiting its binding to HSP90AB1 thereby disrupting the interferon activation pathway. This is ORF9b protein from Homo sapiens (Human).